The following is a 161-amino-acid chain: Cell division protein SepF 2 (161 aa).

Positions 19–47 are disordered; that stretch reads EDSEKAPELSSSRETKTKNQNQSKSLLRS. A compositionally biased stretch (basic and acidic residues) spans 21–35; the sequence is SEKAPELSSSRETKT.

Belongs to the SepF family. Homodimer. Interacts with FtsZ.

The protein localises to the cytoplasm. Functionally, cell division protein that is part of the divisome complex and is recruited early to the Z-ring. Probably stimulates Z-ring formation, perhaps through the cross-linking of FtsZ protofilaments. Its function overlaps with FtsA. This is Cell division protein SepF 2 from Desulforamulus reducens (strain ATCC BAA-1160 / DSM 100696 / MI-1) (Desulfotomaculum reducens).